The following is a 481-amino-acid chain: ATP synthase subunit beta, chloroplastic (481 aa).

161-168 (GGAGVGKT) contacts ATP.

The protein belongs to the ATPase alpha/beta chains family. F-type ATPases have 2 components, CF(1) - the catalytic core - and CF(0) - the membrane proton channel. CF(1) has five subunits: alpha(3), beta(3), gamma(1), delta(1), epsilon(1). CF(0) has four main subunits: a(1), b(1), b'(1) and c(9-12).

It is found in the plastid. The protein localises to the chloroplast thylakoid membrane. It carries out the reaction ATP + H2O + 4 H(+)(in) = ADP + phosphate + 5 H(+)(out). In terms of biological role, produces ATP from ADP in the presence of a proton gradient across the membrane. The catalytic sites are hosted primarily by the beta subunits. In Dictyota dichotoma, this protein is ATP synthase subunit beta, chloroplastic.